The primary structure comprises 100 residues: Putative pterin-4-alpha-carbinolamine dehydratase (100 aa).

Belongs to the pterin-4-alpha-carbinolamine dehydratase family.

It carries out the reaction (4aS,6R)-4a-hydroxy-L-erythro-5,6,7,8-tetrahydrobiopterin = (6R)-L-erythro-6,7-dihydrobiopterin + H2O. This is Putative pterin-4-alpha-carbinolamine dehydratase from Rhodopseudomonas palustris (strain ATCC BAA-98 / CGA009).